The sequence spans 868 residues: Leucine-rich repeat receptor-like serine/threonine-protein kinase At2g14510 (868 aa).

The N-terminal stretch at 1 to 23 is a signal peptide; that stretch reads METRNKFMLLACATFSIMSLVKS. Over 24 to 510 the chain is Extracellular; it reads QNQQGFISLD…KHQPKSWLVA (487 aa). Residues Asn-48, Asn-68, Asn-231, Asn-235, Asn-258, Asn-291, Asn-433, and Asn-446 are each glycosylated (N-linked (GlcNAc...) asparagine). LRR repeat units follow at residues 412 to 435, 436 to 458, and 460 to 482; these read RIIS…QNLT, MLRE…LATI, and PLLV…LQDR. N-linked (GlcNAc...) asparagine glycosylation occurs at Asn-495. A helical transmembrane segment spans residues 511–531; it reads IVASISCVAVTIIVLVLIFIF. Topologically, residues 532–868 are cytoplasmic; sequence RRRKSSTRKV…TFISDIPSAR (337 aa). A Protein kinase domain is found at 563 to 832; the sequence is NNFEVVLGKG…NMTRVAHELN (270 aa). ATP-binding positions include 569-577 and Lys-590; that span reads LGKGGFGVV. Tyr-635 bears the Phosphotyrosine mark. Asp-687 functions as the Proton acceptor in the catalytic mechanism. Ser-721 is subject to Phosphoserine. Phosphothreonine occurs at positions 722 and 727. Tyr-735 is modified (phosphotyrosine).

The protein belongs to the protein kinase superfamily. Ser/Thr protein kinase family.

Its subcellular location is the cell membrane. It catalyses the reaction L-seryl-[protein] + ATP = O-phospho-L-seryl-[protein] + ADP + H(+). The catalysed reaction is L-threonyl-[protein] + ATP = O-phospho-L-threonyl-[protein] + ADP + H(+). This chain is Leucine-rich repeat receptor-like serine/threonine-protein kinase At2g14510, found in Arabidopsis thaliana (Mouse-ear cress).